The primary structure comprises 133 residues: Small ribosomal subunit protein uS11 (133 aa).

The segment at 1–22 (MPPKTRGAVRKPRKKDKKNIAL) is disordered. Basic residues predominate over residues 7–17 (GAVRKPRKKDK).

The protein belongs to the universal ribosomal protein uS11 family. Part of the 30S ribosomal subunit. Interacts with proteins S7 and S18. Binds to IF-3.

In terms of biological role, located on the platform of the 30S subunit, it bridges several disparate RNA helices of the 16S rRNA. Forms part of the Shine-Dalgarno cleft in the 70S ribosome. The chain is Small ribosomal subunit protein uS11 from Renibacterium salmoninarum (strain ATCC 33209 / DSM 20767 / JCM 11484 / NBRC 15589 / NCIMB 2235).